The sequence spans 389 residues: UDP-D-apiose/UDP-D-xylose synthase 1 (389 aa).

NAD(+)-binding residues include Phe28, Ile29, Asp49, Asn76, Ile77, and Leu96. Residues Tyr105, Thr139, Glu141, Arg182, and Tyr185 each coordinate UDP-alpha-D-glucuronate. Residues Tyr185 and Lys189 each contribute to the NAD(+) site. Catalysis depends on Tyr185, which acts as the Proton acceptor. Asn214 provides a ligand contact to UDP-alpha-D-glucuronate. Residues Trp215 and Arg235 each contribute to the NAD(+) site. Positions 251, 253, 260, 331, 335, 337, and 341 each coordinate UDP-alpha-D-glucuronate.

The protein belongs to the NAD(P)-dependent epimerase/dehydratase family. Homodimer and heterodimer with AXS2. Requires NAD(+) as cofactor. Widely expressed with stronger expression in leaves and stems, and lower levels in flowers, siliques, pistils, pollen and roots.

It is found in the cytoplasm. It catalyses the reaction UDP-alpha-D-glucuronate + H(+) = UDP-alpha-D-xylose + CO2. The enzyme catalyses UDP-alpha-D-glucuronate + H(+) = UDP-alpha-D-apiose + CO2. With respect to regulation, inhibited by UDP-D-galacturonate. Together with AXS2, catalyzes the conversion of UDP-D-glucuronate into a mixture of UDP-D-apiose (UDP-Api) as the main product and UDP-D-xylose to a lesser extent, via a cycle of oxidation and reduction. D-Apiose (3-C-hydroxymethyl-d-erythrose) is the only plant cell wall monosaccharide with a branched carbon skeleton and is found in rhamnogalacturonan II (RG-II), apiogalacturonan, and several apioglycosides. The sequence is that of UDP-D-apiose/UDP-D-xylose synthase 1 from Arabidopsis thaliana (Mouse-ear cress).